Here is a 1104-residue protein sequence, read N- to C-terminus: Nitrite reductase [NAD(P)H] (1104 aa).

Q44–E79 provides a ligand contact to FAD. Y146 to T176 lines the NAD(+) pocket. The disordered stretch occupies residues K396 to P419. Residues C500, C502, C535, and C538 each coordinate [2Fe-2S] cluster. Residues C720, C726, C760, and C764 each coordinate [4Fe-4S] cluster. Siroheme is bound at residue C764. Positions W932–Y1040 constitute a Rieske domain. C976, H978, C1001, and H1004 together coordinate [2Fe-2S] cluster. The interval G1081–W1104 is disordered. Polar residues predominate over residues P1094–W1104.

The protein belongs to the nitrite and sulfite reductase 4Fe-4S domain family. Homodimer. Siroheme is required as a cofactor. The cofactor is [4Fe-4S] cluster. Requires FAD as cofactor. [2Fe-2S] cluster serves as cofactor.

The enzyme catalyses NH4(+) + 3 NADP(+) + 2 H2O = nitrite + 3 NADPH + 5 H(+). It catalyses the reaction NH4(+) + 3 NAD(+) + 2 H2O = nitrite + 3 NADH + 5 H(+). It functions in the pathway nitrogen metabolism; nitrate reduction (assimilation). This is Nitrite reductase [NAD(P)H] (niiA) from Emericella nidulans (strain FGSC A4 / ATCC 38163 / CBS 112.46 / NRRL 194 / M139) (Aspergillus nidulans).